Reading from the N-terminus, the 88-residue chain is Small capsomere-interacting protein (88 aa).

The tract at residues 1–30 is disordered; sequence MTTIRSDDLSNQITQISGSSKKEEEKKKQQ. Over residues 9–19 the composition is skewed to polar residues; the sequence is LSNQITQISGS.

This sequence belongs to the herpesviridae small capsomere-interacting protein family. As to quaternary structure, interacts with the major capsid protein/MCP.

It localises to the virion. It is found in the host nucleus. Functionally, participates in the assembly of the infectious particles by decorating the outer surface of the capsid shell and thus forming a layer between the capsid and the tegument. Complexes composed of the major capsid protein and small capsomere-interacting protein/SCP assemble together in the host cytoplasm and are translocated to the nucleus, where they accumulate and participate in capsid assembly. This chain is Small capsomere-interacting protein, found in Human herpesvirus 6A (strain Uganda-1102) (HHV-6 variant A).